The sequence spans 491 residues: Fibrinogen beta chain (491 aa).

The signal sequence occupies residues Met-1–Ser-30. Pyrrolidone carboxylic acid is present on Gln-31. The segment at Arg-44–Pro-75 is disordered. The beta-chain polymerization, binding distal domain of another fibrin stretch occupies residues Gly-45–Arg-47. Positions Arg-47–Pro-57 are enriched in basic and acidic residues. Positions Lys-157–Tyr-222 form a coiled coil. 2 disulfides stabilise this stretch: Cys-231–Cys-316 and Cys-241–Cys-270. Positions Asn-232–Phe-488 constitute a Fibrinogen C-terminal domain. A glycan (N-linked (GlcNAc...) asparagine) is linked at Asn-394. Cys-424 and Cys-437 form a disulfide bridge.

In terms of assembly, heterohexamer; disulfide linked. Contains 2 sets of 3 non-identical chains (alpha, beta and gamma). The 2 heterotrimers are in head to head conformation with the N-termini in a small central domain. Post-translationally, conversion of fibrinogen to fibrin is triggered by thrombin, which cleaves fibrinopeptides A and B from alpha and beta chains, and thus exposes the N-terminal polymerization sites responsible for the formation of the soft clot. The soft clot is converted into the hard clot by factor XIIIA which catalyzes the epsilon-(gamma-glutamyl)lysine cross-linking between gamma chains (stronger) and between alpha chains (weaker) of different monomers. In terms of tissue distribution, detected in blood plasma (at protein level).

The protein localises to the secreted. In terms of biological role, cleaved by the protease thrombin to yield monomers which, together with fibrinogen alpha (FGA) and fibrinogen gamma (FGG), polymerize to form an insoluble fibrin matrix. Fibrin has a major function in hemostasis as one of the primary components of blood clots. In addition, functions during the early stages of wound repair to stabilize the lesion and guide cell migration during re-epithelialization. Was originally thought to be essential for platelet aggregation, based on in vitro studies using anticoagulated blood. However subsequent studies have shown that it is not absolutely required for thrombus formation in vivo. Enhances expression of SELP in activated platelets. Maternal fibrinogen is essential for successful pregnancy. Fibrin deposition is also associated with infection, where it protects against IFNG-mediated hemorrhage. May also facilitate the antibacterial immune response via both innate and T-cell mediated pathways. The chain is Fibrinogen beta chain (FGB) from Homo sapiens (Human).